Consider the following 169-residue polypeptide: Crossover junction endodeoxyribonuclease RuvC (169 aa).

Catalysis depends on residues Asp-12, Glu-72, and Asp-144. Mg(2+) is bound by residues Asp-12, Glu-72, and Asp-144.

It belongs to the RuvC family. In terms of assembly, homodimer which binds Holliday junction (HJ) DNA. The HJ becomes 2-fold symmetrical on binding to RuvC with unstacked arms; it has a different conformation from HJ DNA in complex with RuvA. In the full resolvosome a probable DNA-RuvA(4)-RuvB(12)-RuvC(2) complex forms which resolves the HJ. Requires Mg(2+) as cofactor.

It localises to the cytoplasm. It catalyses the reaction Endonucleolytic cleavage at a junction such as a reciprocal single-stranded crossover between two homologous DNA duplexes (Holliday junction).. The RuvA-RuvB-RuvC complex processes Holliday junction (HJ) DNA during genetic recombination and DNA repair. Endonuclease that resolves HJ intermediates. Cleaves cruciform DNA by making single-stranded nicks across the HJ at symmetrical positions within the homologous arms, yielding a 5'-phosphate and a 3'-hydroxyl group; requires a central core of homology in the junction. The consensus cleavage sequence is 5'-(A/T)TT(C/G)-3'. Cleavage occurs on the 3'-side of the TT dinucleotide at the point of strand exchange. HJ branch migration catalyzed by RuvA-RuvB allows RuvC to scan DNA until it finds its consensus sequence, where it cleaves and resolves the cruciform DNA. This chain is Crossover junction endodeoxyribonuclease RuvC, found in Xanthobacter autotrophicus (strain ATCC BAA-1158 / Py2).